The following is a 307-amino-acid chain: Ribosomal RNA small subunit methyltransferase H (307 aa).

Residues 32–34 (GGH), Asp-52, Phe-78, Asp-99, and Gln-106 each bind S-adenosyl-L-methionine.

Belongs to the methyltransferase superfamily. RsmH family.

The protein localises to the cytoplasm. The catalysed reaction is cytidine(1402) in 16S rRNA + S-adenosyl-L-methionine = N(4)-methylcytidine(1402) in 16S rRNA + S-adenosyl-L-homocysteine + H(+). Its function is as follows. Specifically methylates the N4 position of cytidine in position 1402 (C1402) of 16S rRNA. The sequence is that of Ribosomal RNA small subunit methyltransferase H from Acinetobacter baumannii (strain AB0057).